The following is a 384-amino-acid chain: MAP kinase-activated protein kinase 3 (384 aa).

Residue Met-1 is modified to N-acetylmethionine. The interval 1 to 22 is disordered; it reads MDVETAEEQGGPAPPSGVPCGP. In terms of domain architecture, Protein kinase spans 46 to 306; that stretch reads QLSKQVLGLG…ITQFMNHPWI (261 aa). Residues 52 to 60 and Lys-75 each bind ATP; that span reads LGLGVNGKV. Asp-168 (proton acceptor) is an active-site residue. At Thr-203 the chain carries Phosphothreonine; by MAPK14. Ser-253 carries the post-translational modification Phosphoserine; by MAPK14. Ser-309 bears the Phosphoserine; by autocatalysis mark. The interval 309–345 is autoinhibitory helix; the sequence is SMVVPQTPLHTARVLQEDRDHWDEVKEEMTSALATMR. Thr-315 bears the Phosphothreonine; by MAPK14 mark. The Nuclear export signal (NES) motif lies at 337–346; the sequence is MTSALATMRV. Residues 347 to 371 form a p38 MAPK-binding site region; that stretch reads DYDQVKIKDLKTSNNRLLNKRRKKQ. Short sequence motifs (bipartite nuclear localization signal) lie at residues 352–355 and 366–370; these read KIKD and KRRKK. Residues 359–384 are disordered; the sequence is SNNRLLNKRRKKQAGSSSGSQGCNNQ. A compositionally biased stretch (low complexity) spans 373–384; it reads GSSSGSQGCNNQ.

The protein belongs to the protein kinase superfamily. CAMK Ser/Thr protein kinase family. In terms of assembly, heterodimer with p38-alpha/MAPK14. The heterodimer with p38-alpha/MAPK14 forms a stable complex: molecules are positioned 'face to face' so that the ATP-binding sites of both kinases are at the heterodimer interface. Interacts with TCF3 and with polycomb proteins, such as PCH2 and BMI1/PCGF4. Phosphorylated and activated by MAPK1/ERK2 and MAPK3/ERK1. Phosphorylated and activated by MAP kinase p38-alpha/MAPK14 at Thr-203, Ser-253 and Thr-315.

Its subcellular location is the nucleus. It localises to the cytoplasm. It catalyses the reaction L-seryl-[protein] + ATP = O-phospho-L-seryl-[protein] + ADP + H(+). The catalysed reaction is L-threonyl-[protein] + ATP = O-phospho-L-threonyl-[protein] + ADP + H(+). Its activity is regulated as follows. Activated following phosphorylation by p38-alpha/MAPK14 following various stresses. Inhibited by ligand 5B (2'-[2-(1,3-benzodioxol-5-yl)pyrimidin-4-yl]-5',6'-dihydrospiro[piperidine-4,7'-pyrrolo[3,2-c]pyridin]- 4'(1'h)-one) and ligand P4O (2-[2-(2-fluorophenyl)pyridin-4-yl]-1,5,6,7-tetrahydro- 4h-pyrrolo[3,2-c]pyridin-4-one), 2 ATP-competitive inhibitors. In terms of biological role, stress-activated serine/threonine-protein kinase involved in cytokines production, endocytosis, cell migration, chromatin remodeling and transcriptional regulation. Following stress, it is phosphorylated and activated by MAP kinase p38-alpha/MAPK14, leading to phosphorylation of substrates. Phosphorylates serine in the peptide sequence, Hyd-X-R-X(2)-S, where Hyd is a large hydrophobic residue. MAPKAPK2 and MAPKAPK3, share the same function and substrate specificity, but MAPKAPK3 kinase activity and level in protein expression are lower compared to MAPKAPK2. Phosphorylates HSP27/HSPB1, KRT18, KRT20, RCSD1, RPS6KA3, TAB3 and TTP/ZFP36. Mediates phosphorylation of HSP27/HSPB1 in response to stress, leading to dissociate HSP27/HSPB1 from large small heat-shock protein (sHsps) oligomers and impair their chaperone activities and ability to protect against oxidative stress effectively. Involved in inflammatory response by regulating tumor necrosis factor (TNF) and IL6 production post-transcriptionally: acts by phosphorylating AU-rich elements (AREs)-binding proteins, such as TTP/ZFP36, leading to regulate the stability and translation of TNF and IL6 mRNAs. Phosphorylation of TTP/ZFP36, a major post-transcriptional regulator of TNF, promotes its binding to 14-3-3 proteins and reduces its ARE mRNA affinity leading to inhibition of dependent degradation of ARE-containing transcript. Involved in toll-like receptor signaling pathway (TLR) in dendritic cells: required for acute TLR-induced macropinocytosis by phosphorylating and activating RPS6KA3. Also acts as a modulator of Polycomb-mediated repression. The chain is MAP kinase-activated protein kinase 3 (MAPKAPK3) from Bos taurus (Bovine).